The primary structure comprises 140 residues: MVRALLFHVITYTKFIVPVVKLLIMSAIAGVIAGAFGGGIGGVGDAIGTIIGDLERAIARFGGSIVNAFKTVIDKILTLAVRIGRIIEKYFRIAVHYIVLFLRLAYRYMYSFYTEFQKDPWRSLQFVGSMAILLNNSLFP.

2 helical membrane passes run 23–43 and 93–110; these read LIMSAIAGVIAGAFGGGIGGV and IAVHYIVLFLRLAYRYMY.

It is found in the host membrane. This Saccharolobus islandicus (Sulfolobus islandicus) protein is Putative transmembrane protein 49 (SIFV0049).